A 330-amino-acid chain; its full sequence is DNA-directed RNA polymerase subunit alpha (330 aa).

An alpha N-terminal domain (alpha-NTD) region spans residues 1–231 (MAILAFQKPD…IYHFMLFSDE (231 aa)). The segment at 253 to 330 (MRQLLKTKLV…DISKYKLDKE (78 aa)) is alpha C-terminal domain (alpha-CTD).

The protein belongs to the RNA polymerase alpha chain family. Homodimer. The RNAP catalytic core consists of 2 alpha, 1 beta, 1 beta' and 1 omega subunit. When a sigma factor is associated with the core the holoenzyme is formed, which can initiate transcription.

The enzyme catalyses RNA(n) + a ribonucleoside 5'-triphosphate = RNA(n+1) + diphosphate. Its function is as follows. DNA-dependent RNA polymerase catalyzes the transcription of DNA into RNA using the four ribonucleoside triphosphates as substrates. The chain is DNA-directed RNA polymerase subunit alpha from Phocaeicola vulgatus (strain ATCC 8482 / DSM 1447 / JCM 5826 / CCUG 4940 / NBRC 14291 / NCTC 11154) (Bacteroides vulgatus).